The following is a 333-amino-acid chain: Protein translocase subunit SecF (333 aa).

Helical transmembrane passes span 27 to 47 (AIVM…NFGI), 152 to 172 (VWTA…YIWV), 180 to 200 (LGAV…FAVL), 207 to 227 (TTVA…VVVF), 253 to 275 (TLSR…LIWG), and 285 to 307 (AMVW…IVLF).

It belongs to the SecD/SecF family. SecF subfamily. Forms a complex with SecD. Part of the essential Sec protein translocation apparatus which comprises SecA, SecYEG and auxiliary proteins SecDF-YajC and YidC.

The protein localises to the cell inner membrane. Functionally, part of the Sec protein translocase complex. Interacts with the SecYEG preprotein conducting channel. SecDF uses the proton motive force (PMF) to complete protein translocation after the ATP-dependent function of SecA. This is Protein translocase subunit SecF from Rhodobacter capsulatus (strain ATCC BAA-309 / NBRC 16581 / SB1003).